A 512-amino-acid chain; its full sequence is Probable multidrug resistance protein EmrY (512 aa).

Residues 1–8 (MAITKSTP) are Cytoplasmic-facing. The chain crosses the membrane as a helical span at residues 9–29 (APLTGGTLWCVTIALSLATFM). A topological domain (periplasmic) is located at residue Q30. The helical transmembrane segment at 31–51 (MLDSTISNVAIPTISGFLGAS) threads the bilayer. Over 52-53 (TD) the chain is Cytoplasmic. Residues 54–74 (EGTWVITSFGVANAIAIPVTG) traverse the membrane as a helical segment. Over 75 to 84 (RLAQRIGELR) the chain is Periplasmic. 2 helical membrane-spanning segments follow: residues 85–105 (LFLL…LSTN) and 106–126 (LDVL…LIPL). Topologically, residues 127-141 (SQSLLLRNYPPEKRT) are periplasmic. A helical membrane pass occupies residues 142-162 (FALALWSMTVIIAPICGPILG). Residues 163–172 (GYICDNFSWG) are Cytoplasmic-facing. The chain crosses the membrane as a helical span at residues 173–193 (WIFLINVPMGIIVLTLCLTLL). The Periplasmic segment spans residues 194-204 (KGRETETSPVK). The chain crosses the membrane as a helical span at residues 205-225 (MNLPGLTLLVLGVGGLQIMLD). The Cytoplasmic portion of the chain corresponds to 226-234 (KGRDLDWFN). The helical transmembrane segment at 235-255 (SSTIIILTVVSVISLISLVIW) threads the bilayer. Over 256 to 273 (ESTSENPILDLSLFKSRN) the chain is Periplasmic. The helical transmembrane segment at 274 to 294 (FTIGIVSITCAYLFYSGAIVL) threads the bilayer. Over 295-307 (MPQLLQETMGYNA) the chain is Cytoplasmic. Residues 308–328 (IWAGLAYAPIGIMPLLISPLI) traverse the membrane as a helical segment. The Periplasmic portion of the chain corresponds to 329–338 (GRYGNKIDMR). A helical transmembrane segment spans residues 339-359 (LLVTFSFLMYAVCYYWRSVTF). Residues 360 to 364 (MPTID) are Cytoplasmic-facing. The chain crosses the membrane as a helical span at residues 365–385 (FTGIILPQFFQGFAVACFFLP). The Periplasmic portion of the chain corresponds to 386–486 (LTTISFSGLP…LSISANEIFR (101 aa)). Residues 487–507 (MAAIAFILLTVLVWFAKPPFT) form a helical membrane-spanning segment. At 508 to 512 (AKGVG) the chain is on the cytoplasmic side.

The protein belongs to the major facilitator superfamily. EmrB family. As to quaternary structure, part of the tripartite efflux system EmrYK-TolC, which is composed of an inner membrane transporter, EmrY, a membrane fusion protein, EmrK, and an outer membrane component, TolC. The complex forms a large protein conduit and can translocate molecules across both the inner and outer membranes.

Its subcellular location is the cell inner membrane. In terms of biological role, part of the tripartite efflux system EmrYK-TolC, which confers resistance to various drugs. In Escherichia coli (strain K12), this protein is Probable multidrug resistance protein EmrY (emrY).